The chain runs to 410 residues: Phytoene synthase 1, chloroplastic (410 aa).

The transit peptide at 1–62 (MAIILVRAAS…EAGRPSPAVY (62 aa)) directs the protein to the chloroplast.

It belongs to the phytoene/squalene synthase family. In terms of assembly, monomer. As to expression, expressed in embryos, endosperm and seedling leaves. Expressed in leaves and endosperm.

Its subcellular location is the plastid. It is found in the chloroplast stroma. The enzyme catalyses 2 (2E,6E,10E)-geranylgeranyl diphosphate = 15-cis-phytoene + 2 diphosphate. It functions in the pathway carotenoid biosynthesis; phytoene biosynthesis; all-trans-phytoene from geranylgeranyl diphosphate: step 1/1. In terms of biological role, catalyzes the conversion of geranylgeranyl diphosphate to phytoene. Mediates the first committed step in carotenoid biosynthesis. In Zea mays (Maize), this protein is Phytoene synthase 1, chloroplastic.